Here is a 212-residue protein sequence, read N- to C-terminus: Adenylate kinase (212 aa).

Residue 10–15 (GAGKGT) coordinates ATP. Positions 30 to 59 (STGDMFRAAIANQTEMGVLAKSYIDKGELV) are NMP. AMP-binding positions include threonine 31, arginine 36, 57–59 (ELV), 86–89 (GYPR), and glutamine 93. The tract at residues 127-159 (GRIIHRETGETFHKVFNPPADYKEEDYYQREDD) is LID. Residues arginine 128 and 137–138 (TF) contribute to the ATP site. The AMP site is built by arginine 156 and arginine 167. Glutamine 195 is a binding site for ATP.

The protein belongs to the adenylate kinase family. In terms of assembly, monomer.

The protein localises to the cytoplasm. The enzyme catalyses AMP + ATP = 2 ADP. Its pathway is purine metabolism; AMP biosynthesis via salvage pathway; AMP from ADP: step 1/1. Its function is as follows. Catalyzes the reversible transfer of the terminal phosphate group between ATP and AMP. Plays an important role in cellular energy homeostasis and in adenine nucleotide metabolism. This chain is Adenylate kinase, found in Streptococcus sanguinis (strain SK36).